The sequence spans 764 residues: Thyrotropin receptor (764 aa).

Residues 1-20 (MRPADLLQLVLLLDLPRDLG) form the signal peptide. Topologically, residues 21-413 (GMGCSSPPCE…EFNPCEDIMG (393 aa)) are extracellular. Cys31 and Cys41 are joined by a disulfide. N-linked (GlcNAc...) asparagine glycosylation is found at Asn77, Asn99, and Asn113. LRR repeat units lie at residues 100 to 124 (LSKVTHIEIRNTRNLTYIDPDALKE), 125 to 150 (LPLLKFLGIFNTGLKMFPDLTKVYST), 152 to 174 (IFFILEITDNPYMTSIPVNAFQG), 176 to 199 (CNETLTLKLYNNGFTSVQGYAFNG), 200 to 223 (TKLDAVYLNKNKYLTVIDKDAFGG), 227 to 248 (GPSLLDVSQTSVTALPSKGLEH), and 250 to 271 (KELIARNTWTLKKLPLSLSFLH). Residues Asn177 and Asn198 are each glycosylated (N-linked (GlcNAc...) asparagine). An N-linked (GlcNAc...) asparagine glycan is attached at Asn302. The residue at position 385 (Tyr385) is a Sulfotyrosine. A helical transmembrane segment spans residues 414 to 441 (YKFLRIVVWFVSLLALLGNVFVLLILLT). The Cytoplasmic segment spans residues 442–450 (SHYKLNVPR). Residues 451 to 473 (FLMCNLAFADFCMGMYLLLIASV) form a helical membrane-spanning segment. Over 474–494 (DLYTHSEYYNHAIDWQTGPGC) the chain is Extracellular. The cysteines at positions 494 and 569 are disulfide-linked. The chain crosses the membrane as a helical span at residues 495–517 (NTAGFFTVFASELSVYTLTVITL). Residues 518-537 (ERWYAITFAMRLDRKIRLRH) are Cytoplasmic-facing. The chain crosses the membrane as a helical span at residues 538–560 (ACAIMVGGWVCCFLLALLPLVGI). At 561–580 (SSYAKVSICLPMDTETPLAL) the chain is on the extracellular side. Residues 581-602 (AYIVFVLTLNIVAFVIVCCCYV) traverse the membrane as a helical segment. Residues 603-625 (KIYITVRNPQYNPGDKDTKIAKR) lie on the Cytoplasmic side of the membrane. The chain crosses the membrane as a helical span at residues 626–649 (MAVLIFTDFICMAPISFYALSAIL). The Extracellular segment spans residues 650 to 660 (NKPLITVSNSK). The helical transmembrane segment at 661 to 682 (ILLVLFYPLNSCANPFLYAIFT) threads the bilayer. Residues 683–764 (KAFQRDVFIL…ISEEYMQTVL (82 aa)) are Cytoplasmic-facing. A PDZ-binding motif is present at residues 762 to 764 (TVL).

This sequence belongs to the G-protein coupled receptor 1 family. FSH/LSH/TSH subfamily. As to quaternary structure, interacts with heterodimer GPHA2:GPHB5; this interaction stimulates cAMP production. Interacts (via the PDZ-binding motif) with SCRIB; regulates TSHR trafficking and function. Glycosylated. In terms of processing, sulfated. Sulfation on Tyr-385 plays a role in thyrotropin receptor binding and activation. In terms of tissue distribution, expressed in thyroide cells (at protein level). Expressed in the thyroid.

It localises to the cell membrane. It is found in the basolateral cell membrane. Its function is as follows. Receptor for the thyroid-stimulating hormone (TSH) or thyrotropin. Also acts as a receptor for the heterodimeric glycoprotein hormone (GPHA2:GPHB5) or thyrostimulin. The activity of this receptor is mediated by G proteins which activate adenylate cyclase. Plays a central role in controlling thyroid cell metabolism. The protein is Thyrotropin receptor (TSHR) of Homo sapiens (Human).